The chain runs to 460 residues: MAETTPKVKGHVVILPYPVQGHLNPMVQFAKRLVSKNVKVTIATTTYTASSITTPSLSVEPISDGFDFIPIGIPGFSVDTYSESFKLNGSETLTLLIEKFKSTDSPIDCLIYDSFLPWGLEVARSMELSAASFFTNNLTVCSVLRKFSNGDFPLPADPNSAPFRIRGLPSLSYDELPSFVGRHWLTHPEHGRVLLNQFPNHENADWLFVNGFEGLEETQDCENGESDAMKATLIGPMIPSAYLDDRMEDDKDYGASLLKPISKECMEWLETKQAQSVAFVSFGSFGILFEKQLAEVAIALQESDLNFLWVIKEAHIAKLPEGFVESTKDRALLVSWCNQLEVLAHESIGCFLTHCGWNSTLEGLSLGVPMVGVPQWSDQMNDAKFVEEVWKVGYRAKEEAGEVIVKSEELVRCLKGVMEGESSVKIRESSKKWKDLAVKAMSEGGSSDRSINEFIESLGK.

His22 acts as the Proton acceptor in catalysis. An an anthocyanidin-binding site is contributed by His22. Residue Asp113 is the Charge relay of the active site. UDP-alpha-D-glucose is bound by residues Thr135, Gln339, His354, Trp357, Asn358, Ser359, Glu362, Asp378, and Gln379.

This sequence belongs to the UDP-glycosyltransferase family. Expressed in the vasculature, the apical meristems of roots, shoots and inflorescence, and the junction of organ or branches.

It carries out the reaction (Z)-2-phenyl-1-thioacetohydroximate + UDP-alpha-D-glucose = (Z)-desulfoglucotropeolin + UDP. It catalyses the reaction a (Z)-omega-(methylsulfanyl)alkyl-thiohydroximate + UDP-alpha-D-glucose = an aliphatic (Z)-desulfo-glucosinolate + UDP. The enzyme catalyses (Z)-2-(indol-3-yl)-1-thioacetohydroximate + UDP-alpha-D-glucose = (Z)-indolylmethyl desulfoglucosinolate + UDP. Functionally, involved in the biosynthesis of glucosinolate. In in vitro assay, may use phenylacetothiohydroximate (PATH), but not phenylacetic acid (PAA), indole-3-acetic acid (IAA) or salicylic acid (SA) as substrate. Specific for the thiohydroximate functional group and does not glucosylate the carboxylate group or a hydroxyl group. This chain is UDP-glycosyltransferase 74B1 (UGT74B1), found in Arabidopsis thaliana (Mouse-ear cress).